A 278-amino-acid chain; its full sequence is Dermonecrotic toxin LhSicTox-alphaIV1ii (278 aa).

His-5 is an active-site residue. The Mg(2+) site is built by Glu-25 and Asp-27. Residue His-41 is the Nucleophile of the active site. Disulfide bonds link Cys-45–Cys-51 and Cys-47–Cys-192. Position 85 (Asp-85) interacts with Mg(2+).

It belongs to the arthropod phospholipase D family. Class II subfamily. The cofactor is Mg(2+). Expressed by the venom gland.

It localises to the secreted. It catalyses the reaction an N-(acyl)-sphingosylphosphocholine = an N-(acyl)-sphingosyl-1,3-cyclic phosphate + choline. It carries out the reaction an N-(acyl)-sphingosylphosphoethanolamine = an N-(acyl)-sphingosyl-1,3-cyclic phosphate + ethanolamine. The enzyme catalyses a 1-acyl-sn-glycero-3-phosphocholine = a 1-acyl-sn-glycero-2,3-cyclic phosphate + choline. The catalysed reaction is a 1-acyl-sn-glycero-3-phosphoethanolamine = a 1-acyl-sn-glycero-2,3-cyclic phosphate + ethanolamine. Its function is as follows. Dermonecrotic toxins cleave the phosphodiester linkage between the phosphate and headgroup of certain phospholipids (sphingolipid and lysolipid substrates), forming an alcohol (often choline) and a cyclic phosphate. This toxin acts on sphingomyelin (SM). It may also act on ceramide phosphoethanolamine (CPE), lysophosphatidylcholine (LPC) and lysophosphatidylethanolamine (LPE), but not on lysophosphatidylserine (LPS), and lysophosphatidylglycerol (LPG). It acts by transphosphatidylation, releasing exclusively cyclic phosphate products as second products. Induces dermonecrosis, hemolysis, increased vascular permeability, edema, inflammatory response, and platelet aggregation. The polypeptide is Dermonecrotic toxin LhSicTox-alphaIV1ii (Loxosceles hirsuta (Recluse spider)).